Reading from the N-terminus, the 272-residue chain is PHD finger protein ALFIN-LIKE 6 (272 aa).

Residues 1–23 (MEGGGGGGGGGGGGGGGGGGGGA) show a composition bias toward gly residues. Disordered stretches follow at residues 1-24 (MEGG…GGAP) and 162-218 (QAKE…DNTL). The span at 168–182 (PNSSSKSNKPSSKVQ) shows a compositional bias: low complexity. A compositionally biased stretch (basic and acidic residues) spans 183–200 (SKAESRSKSKLSAPKDEE). The span at 201–214 (GSGDDEGEEEEDDH) shows a compositional bias: acidic residues. Residues 216–268 (NTLCGTCGTNDGKDEFWICCDNCEKWYHGKCVKITPARAEHIKQYKCPDCTNK) form a PHD-type zinc finger.

The protein belongs to the Alfin family.

The protein resides in the nucleus. Functionally, histone-binding component that specifically recognizes H3 tails trimethylated on 'Lys-4' (H3K4me3), which mark transcription start sites of virtually all active genes. In Oryza sativa subsp. japonica (Rice), this protein is PHD finger protein ALFIN-LIKE 6.